Reading from the N-terminus, the 844-residue chain is DNA mismatch repair protein MutS (844 aa).

602–609 (GPNMSGKS) contributes to the ATP binding site.

It belongs to the DNA mismatch repair MutS family.

In terms of biological role, this protein is involved in the repair of mismatches in DNA. It is possible that it carries out the mismatch recognition step. This protein has a weak ATPase activity. This is DNA mismatch repair protein MutS from Streptococcus pneumoniae (strain Hungary19A-6).